Here is a 304-residue protein sequence, read N- to C-terminus: Non-specific ribonucleoside hydrolase RihC (304 aa).

The active site involves His233.

The protein belongs to the IUNH family. RihC subfamily.

Its function is as follows. Hydrolyzes both purine and pyrimidine ribonucleosides with a broad-substrate specificity. In Escherichia coli (strain SMS-3-5 / SECEC), this protein is Non-specific ribonucleoside hydrolase RihC.